A 203-amino-acid chain; its full sequence is E3 ubiquitin-protein ligase RNF152 (203 aa).

The segment at 12-55 (CQICFNYYSPRRRPKLLDCKHTCCSVCLQQMRTSQKDVRCPWCR) adopts an RING-type zinc-finger fold. The necessary for interaction with RRAGA stretch occupies residues 106–165 (ISKERTLLPGDMGCRLLPGSQQKSLTVVTIPAEQQPLQGGAPQEAVEEEPDRRGVAKSST). Residues 140–159 (QPLQGGAPQEAVEEEPDRRG) form a disordered region. A helical membrane pass occupies residues 167–187 (SGVCTVILVACVLVFLLGIVL).

This sequence belongs to the RNF152 family. In terms of assembly, interacts with RRAGA (inactive GDP-bound form); stimulated by amino acid starvation. Interacts with SEC16A. Post-translationally, ubiquitinated. Autoubiquitinated in vitro, leading to its degradation by the proteasome.

The protein localises to the lysosome membrane. It catalyses the reaction S-ubiquitinyl-[E2 ubiquitin-conjugating enzyme]-L-cysteine + [acceptor protein]-L-lysine = [E2 ubiquitin-conjugating enzyme]-L-cysteine + N(6)-ubiquitinyl-[acceptor protein]-L-lysine.. Its pathway is protein modification; protein ubiquitination. Its function is as follows. E3 ubiquitin-protein ligase that acts as a negative regulator of mTORC1 signaling by mediating ubiquitination of RagA/RRAGA and RHEB. Catalyzes 'Lys-63'-linked polyubiquitination of RagA/RRAGA in response to amino acid starvation, thereby regulating mTORC1 signaling. Also mediates monoubiquitination of RHEB, promoting its association with the TSC-TBC complex and subsequent inhibition. Also mediates 'Lys-48'-linked polyubiquitination of target proteins and their subsequent targeting to the proteasome for degradation. Induces apoptosis when overexpressed. This chain is E3 ubiquitin-protein ligase RNF152, found in Rattus norvegicus (Rat).